The primary structure comprises 348 residues: GTPase Obg (348 aa).

One can recognise an Obg domain in the interval 1 to 159; it reads MKFLDLAKVY…RTIWLRLKLI (159 aa). The OBG-type G domain occupies 160 to 327; the sequence is ADAGLLGLPN…VLRAVRAEID (168 aa). GTP-binding positions include 166-173, 191-195, 212-215, 279-282, and 308-310; these read GLPNAGKS, FTTLH, DIPG, NKID, and SSV. Residues S173 and T193 each contribute to the Mg(2+) site.

It belongs to the TRAFAC class OBG-HflX-like GTPase superfamily. OBG GTPase family. Monomer. It depends on Mg(2+) as a cofactor.

Its subcellular location is the cytoplasm. Its function is as follows. An essential GTPase which binds GTP, GDP and possibly (p)ppGpp with moderate affinity, with high nucleotide exchange rates and a fairly low GTP hydrolysis rate. Plays a role in control of the cell cycle, stress response, ribosome biogenesis and in those bacteria that undergo differentiation, in morphogenesis control. This chain is GTPase Obg, found in Ruegeria sp. (strain TM1040) (Silicibacter sp.).